Here is a 401-residue protein sequence, read N- to C-terminus: 1-deoxy-D-xylulose 5-phosphate reductoisomerase (401 aa).

The NADPH site is built by T10, G11, S12, I13, N38, and N124. Residue K125 coordinates 1-deoxy-D-xylulose 5-phosphate. An NADPH-binding site is contributed by E126. D150 serves as a coordination point for Mn(2+). 1-deoxy-D-xylulose 5-phosphate-binding residues include S151, E152, S186, and H209. E152 is a Mn(2+) binding site. G215 lines the NADPH pocket. Residues S222, N227, K228, and E231 each contribute to the 1-deoxy-D-xylulose 5-phosphate site. E231 is a Mn(2+) binding site.

It belongs to the DXR family. It depends on Mg(2+) as a cofactor. The cofactor is Mn(2+).

The enzyme catalyses 2-C-methyl-D-erythritol 4-phosphate + NADP(+) = 1-deoxy-D-xylulose 5-phosphate + NADPH + H(+). Its pathway is isoprenoid biosynthesis; isopentenyl diphosphate biosynthesis via DXP pathway; isopentenyl diphosphate from 1-deoxy-D-xylulose 5-phosphate: step 1/6. Functionally, catalyzes the NADPH-dependent rearrangement and reduction of 1-deoxy-D-xylulose-5-phosphate (DXP) to 2-C-methyl-D-erythritol 4-phosphate (MEP). The protein is 1-deoxy-D-xylulose 5-phosphate reductoisomerase of Vibrio campbellii (strain ATCC BAA-1116).